A 616-amino-acid polypeptide reads, in one-letter code: FAD-linked oxidoreductase cheF (616 aa).

The region spanning 160 to 344 (NQGLVSPWYV…LSMTVRVEPA (185 aa)) is the FAD-binding PCMH-type domain.

It belongs to the oxygen-dependent FAD-linked oxidoreductase family. FAD is required as a cofactor.

The protein operates within secondary metabolite biosynthesis. Functionally, FAD-linked oxidoreductase; part of the gene cluster that mediates the biosynthesis of chaetoglobosin A which has a unique inhibitory activity against actin polymerization in mammalian cells. Chaetoglobosin A and its intermediates are involved in the morphological differentiation of C.globosum. The first step of the pathway is the synthesis of prochaetoglobosin I via condensation of one acetyl-CoA, 8 malonyl-CoA, and a L-tryptophan molecule by the PKS-NRPS hybrid synthetase cheA, followed by reduction of backbone double bond to install desired geometry by the enoyl reductase cheB. Further multiple oxidation steps performed by the cytochrome P450 monooxygenases cheE and cheG, as well as by the FAD-linked oxidoreductase cheF, lead to the formation of chaetoglobosin A. Depending on the order of action of these reductases, distinct intermediates can be identified. Within the pathway, the cytochrome P450 monooxygenase cheE catalyzes a stereospecific epoxidation on prochaetoglobosin I, cytoglobosin D, and chaetoglobosin J intermediates. The FAD-linked oxidoreductase cheF performs dehydrogenation of the C-20 hydroxyl groups in the 20-dihyrochaetoglobosin A and cytoglobosin D intermediates. Finally, the cytochrome P450 monooxygenase cheG can catalyze the stereospecific dihydroxylation of prochaetoglobosin I and prochaetoglobosin IV at C-19 and C-20, respectively. The Diels-Alderase cheD may play a role in the post-PKS-NRPS biosynthetic steps catalyzing Diels-Alder cyclization. This Chaetomium globosum (strain ATCC 6205 / CBS 148.51 / DSM 1962 / NBRC 6347 / NRRL 1970) (Soil fungus) protein is FAD-linked oxidoreductase cheF.